A 151-amino-acid chain; its full sequence is Putative UPF0320 protein YFL063W (151 aa).

Belongs to the UPF0320 family.

In Saccharomyces cerevisiae (strain ATCC 204508 / S288c) (Baker's yeast), this protein is Putative UPF0320 protein YFL063W.